An 872-amino-acid chain; its full sequence is Trichohyalin-like protein 1 (872 aa).

An EF-hand domain is found at 46 to 81 (CAIHAVERNLNLLNIDSNGAISFDEFVLAIFSFLNV). Polar residues predominate over residues 117–127 (QWTEGTSQTQD). Disordered regions lie at residues 117 to 759 (QWTE…ERGA), 774 to 813 (LQQTNVTQGEHQNQAQTASVASPEIRRNQSSASLTNDSSD), and 830 to 872 (EFLP…APKQ). Basic and acidic residues-rich tracts occupy residues 142–155 (SLEERAVEHNRVDP), 164–190 (LPVETSEHSDSKNQHLKGDEQSQKVDQ), 218–235 (TKGEGQNKEILQKGDILA), 296–307 (GKDEPSSEHVDL), 324–348 (AAKDESRTAETPEPPIQEKEYETRD), 365–375 (RVERKGVRGPE), 399–435 (EDKKYHELQESSKEKNAGEDSETHELNSEGGEQKDSE), and 486–505 (SGEKNKMTTKIHDKLVKEDD). Polar residues predominate over residues 538-570 (NSETSDLFVQGDSQSQTNPFRGSVQGSDSNNPE). Basic and acidic residues-rich tracts occupy residues 571–584 (TQKHLALSEEKRVQ), 592–608 (RGEDEQVTEEHAQEHEG), and 664–684 (TKKDSRKELKDQSPSTKKEED). Composition is skewed to polar residues over residues 699–708 (ENNAVSQKTC) and 718–729 (SPQQLAGEQSLS). Over residues 730–751 (TKEHDPSVSESGLEERMQRDQE) the composition is skewed to basic and acidic residues. 2 stretches are compositionally biased toward polar residues: residues 774–793 (LQQTNVTQGEHQNQAQTASV) and 801–812 (NQSSASLTNDSS). The span at 849 to 865 (LEDKQGRPQREELEPQK) shows a compositional bias: basic and acidic residues.

Belongs to the S-100 family.

This chain is Trichohyalin-like protein 1 (TCHHL1), found in Bos taurus (Bovine).